Here is a 152-residue protein sequence, read N- to C-terminus: Small ribosomal subunit protein uS15 (152 aa).

Basic residues predominate over residues 1 to 11 (MARMHARRRGK). Residues 1–25 (MARMHARRRGKSSSVRPARNEAPAW) are disordered.

This sequence belongs to the universal ribosomal protein uS15 family. As to quaternary structure, part of the 30S ribosomal subunit.

This chain is Small ribosomal subunit protein uS15, found in Methanoregula boonei (strain DSM 21154 / JCM 14090 / 6A8).